We begin with the raw amino-acid sequence, 206 residues long: LexA repressor (206 aa).

The H-T-H motif DNA-binding region spans 28–48; the sequence is RAEIARRLGFKSANAAEEHLK. Residues Ser-123 and Lys-160 each act as for autocatalytic cleavage activity in the active site.

Belongs to the peptidase S24 family. In terms of assembly, homodimer.

The enzyme catalyses Hydrolysis of Ala-|-Gly bond in repressor LexA.. Represses a number of genes involved in the response to DNA damage (SOS response), including recA and lexA. In the presence of single-stranded DNA, RecA interacts with LexA causing an autocatalytic cleavage which disrupts the DNA-binding part of LexA, leading to derepression of the SOS regulon and eventually DNA repair. This chain is LexA repressor, found in Shewanella piezotolerans (strain WP3 / JCM 13877).